The primary structure comprises 85 residues: Cell division protein ZapA (85 aa).

Residues 59–85 (TAVNVVHDYMKLQEKYEILERQLKEKE) are a coiled coil.

This sequence belongs to the ZapA family. Type 2 subfamily. Homodimer. Interacts with FtsZ.

The protein resides in the cytoplasm. Its function is as follows. Activator of cell division through the inhibition of FtsZ GTPase activity, therefore promoting FtsZ assembly into bundles of protofilaments necessary for the formation of the division Z ring. It is recruited early at mid-cell but it is not essential for cell division. This chain is Cell division protein ZapA, found in Bacillus velezensis (strain DSM 23117 / BGSC 10A6 / LMG 26770 / FZB42) (Bacillus amyloliquefaciens subsp. plantarum).